The following is a 293-amino-acid chain: MAITAAMVKELREKTGAGMLDCKKALVEADGDMNAAIDFLREKGIAKAAAKGDRIAAEGLTAVAVNGNKAALVEINSETDFVAKNERFQSLVQNIADAVLRNGSETAEAALASEYEAGKTIDTYISEEASTIGEKISLRRVALFTKEDNAAFGSYLHMGGRIGSVVVVEGTTDETVAKDIAMHIAAARPLYVDRSSVTEEEKAREEKVLTEQALNEGKPANIVEKMIAGRMNKFYEEICLVDQTFVKDPDFKVGKYVESKGGKIVSFVRFEVGEGMEKREENFAEEVMNQLKK.

The tract at residues 79-82 (TDFV) is involved in Mg(2+) ion dislocation from EF-Tu.

This sequence belongs to the EF-Ts family.

It localises to the cytoplasm. In terms of biological role, associates with the EF-Tu.GDP complex and induces the exchange of GDP to GTP. It remains bound to the aminoacyl-tRNA.EF-Tu.GTP complex up to the GTP hydrolysis stage on the ribosome. This is Elongation factor Ts from Exiguobacterium sibiricum (strain DSM 17290 / CCUG 55495 / CIP 109462 / JCM 13490 / 255-15).